The sequence spans 584 residues: Transcription factor 7-like 1 (584 aa).

Residues 1 to 28 (MPQLGGGRGGAGGGGGGSGAGATSGGDD) show a composition bias toward gly residues. Positions 1–71 (MPQLGGGRGG…VKSSLVNESE (71 aa)) are CTNNB1-binding. 3 disordered regions span residues 1–99 (MPQL…RDYF), 159–179 (ATVKDTRSPSPAHLSNKVPVV), and 194–231 (YSNDHFSPASPPTHLSPEIDPKTGIPRPPHPSELSPYY). Residues 64–78 (SSLVNESENQSSSSD) are compositionally biased toward low complexity. The segment covering 80 to 99 (EAERRPQPARDAFQKPRDYF) has biased composition (basic and acidic residues). A DNA-binding region (HMG box) is located at residues 342 to 410 (VKKPLNAFML…LHAQLYPTWS (69 aa)). Residues 412 to 501 (RDNYGKKKKR…HSEQAQPLSL (90 aa)) form a disordered region. The Nuclear localization signal motif lies at 417–423 (KKKKRKR). Composition is skewed to low complexity over residues 427-437 (LSQTQSQQQIQ) and 470-491 (SALDSPATPSAALASPAAPAAT). Over residues 492 to 501 (HSEQAQPLSL) the composition is skewed to polar residues.

Belongs to the TCF/LEF family. Binds the armadillo repeat of CTNNB1 and forms a stable complex. Interacts with DAZAP2. In terms of tissue distribution, detected in the basal layer of epidermis and in outer root sheath and bulge of hair follicles.

Its subcellular location is the nucleus. Its function is as follows. Participates in the Wnt signaling pathway. Binds to DNA and acts as a repressor in the absence of CTNNB1, and as an activator in its presence. Necessary for the terminal differentiation of epidermal cells, the formation of keratohyalin granules and the development of the barrier function of the epidermis. The sequence is that of Transcription factor 7-like 1 (Tcf7l1) from Mus musculus (Mouse).